A 407-amino-acid polypeptide reads, in one-letter code: METTTVKEISILKNGHVTSPSGFYAGGVHCGLRRKKLDLGWIYSDTPASAAGVYTQNTFQAAPLLITKHTIEHSKQIQSIIVNSANANSFTGKQGYEDALLMQKLVANQLNIEQHHVAVASTGVIGERLPMDKVRNGIRQLSHTQVDAESFEKAILTTDTSTKHVAVQVEIDGKLVTIGGAAKGSGMIHPNMATMLSFITTDANVNQDSLQQALRKVTDQSYNQITVDGDSSTNDMVLVLANGRAENNELNESHPEWSVFMDAWNIVAIELAKMIARDGEGATKLIEVIVKGASTNQQASQIAKAVISSNLVKTAIYGNDANWGRIIGAIGYSGVPVEASKLSIAIGGIQVVNNGEPIDFDEKDCKQALNQETVNIVIDLQSGMDTATAWGCDLTYDYIRINASYRT.

Residues threonine 157, lysine 183, threonine 194, glutamate 280, asparagine 402, and threonine 407 each coordinate substrate. Threonine 194 acts as the Nucleophile in catalysis.

This sequence belongs to the ArgJ family. Heterotetramer of two alpha and two beta chains.

It localises to the cytoplasm. The enzyme catalyses N(2)-acetyl-L-ornithine + L-glutamate = N-acetyl-L-glutamate + L-ornithine. The catalysed reaction is L-glutamate + acetyl-CoA = N-acetyl-L-glutamate + CoA + H(+). Its pathway is amino-acid biosynthesis; L-arginine biosynthesis; L-ornithine and N-acetyl-L-glutamate from L-glutamate and N(2)-acetyl-L-ornithine (cyclic): step 1/1. It participates in amino-acid biosynthesis; L-arginine biosynthesis; N(2)-acetyl-L-ornithine from L-glutamate: step 1/4. In terms of biological role, catalyzes two activities which are involved in the cyclic version of arginine biosynthesis: the synthesis of N-acetylglutamate from glutamate and acetyl-CoA as the acetyl donor, and of ornithine by transacetylation between N(2)-acetylornithine and glutamate. The protein is Arginine biosynthesis bifunctional protein ArgJ of Oceanobacillus iheyensis (strain DSM 14371 / CIP 107618 / JCM 11309 / KCTC 3954 / HTE831).